The chain runs to 271 residues: Phosphonoacetaldehyde hydrolase (271 aa).

Asp-12 (nucleophile) is an active-site residue. Asp-12 and Ala-14 together coordinate Mg(2+). Lys-54 acts as the Schiff-base intermediate with substrate in catalysis. Residue Asp-188 participates in Mg(2+) binding.

Belongs to the HAD-like hydrolase superfamily. PhnX family. Homodimer. Requires Mg(2+) as cofactor.

It carries out the reaction phosphonoacetaldehyde + H2O = acetaldehyde + phosphate + H(+). In terms of biological role, involved in phosphonate degradation. This chain is Phosphonoacetaldehyde hydrolase, found in Vibrio vulnificus (strain CMCP6).